Consider the following 359-residue polypeptide: MKTERVNVNVNNQPYPIYIGENLLQDKSLLQRHVKGRQVMIVSNETIAAFYLDPLKAIYQDFQCDTFILPDGEQYKTLEYWERILHKLACNHHRDTTLIALGGGVVGDITGFAAACYQRGVDFIQVPTTLLAQVDASIGGKTAVNHPVGKNLIGAFHQPKAVIIDLNTLNTLPEREFKAGMAEIVKAALIKDEKFFTDLENKMSDLLQRNFIFLQAVIKRAAEIKRDIVNADEKERSGERALLNLGHTFAHAIERLLGYGQWLHGEAVSAGLVLAAQLSHRKNLLDFESLQRICRLLTQISLPIHFPKSINADELLSAMYMDKKVANERLHLILLEDLGHAVVSDQVDDRELKSFLENG.

NAD(+) is bound by residues Asp-71–Lys-76, Gly-104–Asp-108, Thr-128–Thr-129, Lys-141, Lys-150, and Thr-168–Thr-171. Positions 183, 247, and 264 each coordinate Zn(2+).

It belongs to the sugar phosphate cyclases superfamily. Dehydroquinate synthase family. Co(2+) serves as cofactor. Zn(2+) is required as a cofactor. Requires NAD(+) as cofactor.

It is found in the cytoplasm. The enzyme catalyses 7-phospho-2-dehydro-3-deoxy-D-arabino-heptonate = 3-dehydroquinate + phosphate. It participates in metabolic intermediate biosynthesis; chorismate biosynthesis; chorismate from D-erythrose 4-phosphate and phosphoenolpyruvate: step 2/7. Functionally, catalyzes the conversion of 3-deoxy-D-arabino-heptulosonate 7-phosphate (DAHP) to dehydroquinate (DHQ). The protein is 3-dehydroquinate synthase of Coxiella burnetii (strain Dugway 5J108-111).